The chain runs to 428 residues: Delta-aminolevulinic acid dehydratase, chloroplastic (428 aa).

K294 functions as the Schiff-base intermediate with substrate in the catalytic mechanism. 5-aminolevulinate is bound by residues R304 and K316. E332 contacts Mg(2+). The Schiff-base intermediate with substrate role is filled by K347. Positions 373 and 412 each coordinate 5-aminolevulinate.

The protein belongs to the ALAD family. In terms of assembly, homooctamer. It depends on Mg(2+) as a cofactor.

The protein localises to the plastid. Its subcellular location is the chloroplast. The catalysed reaction is 2 5-aminolevulinate = porphobilinogen + 2 H2O + H(+). The protein operates within porphyrin-containing compound metabolism; protoporphyrin-IX biosynthesis; coproporphyrinogen-III from 5-aminolevulinate: step 1/4. In terms of biological role, catalyzes an early step in the biosynthesis of tetrapyrroles. Binds two molecules of 5-aminolevulinate per subunit, each at a distinct site, and catalyzes their condensation to form porphobilinogen. This Hordeum vulgare (Barley) protein is Delta-aminolevulinic acid dehydratase, chloroplastic (HEMB).